The chain runs to 108 residues: uncharacterized protein (108 aa).

This is an uncharacterized protein from Schizosaccharomyces pombe (strain 972 / ATCC 24843) (Fission yeast).